Consider the following 538-residue polypeptide: Probable folate-biopterin transporter 9, chloroplastic (538 aa).

Residues 1-57 constitute a chloroplast transit peptide; it reads MNNPLLSISNPVKFFKPPIPYRISLNTTINKKQKHQSKTLVVKSNKRSTTSLTSSVS. A run of 12 helical transmembrane segments spans residues 85–105, 129–149, 152–172, 178–198, 220–240, 246–266, 309–329, 339–359, 370–390, 395–415, 447–467, and 479–499; these read VLLC…WLAL, LPMV…IGGA, VPYI…LAIF, VLPS…ITEV, ALMA…YCLL, ILFL…LSSK, LIWI…VFCY, SVIG…TVVY, ALIH…YILV, LAFG…AEIL, LCLS…MIGI, and ILIQ…VPML.

It belongs to the major facilitator superfamily. Folate-biopterin transporter (TC 2.A.71) family.

The protein localises to the plastid. The protein resides in the chloroplast membrane. Functionally, could mediate folate transport. This Arabidopsis thaliana (Mouse-ear cress) protein is Probable folate-biopterin transporter 9, chloroplastic.